Consider the following 260-residue polypeptide: MVLIRVLANLLILQLFYAQKSSELIIGGDECNINEHRFLVALYTFRSRRLHCGGILINQEWVLSAARCNRKNIRIQLGMHSTNVINEDVQTRVPKEKFFCLSSKTHTRWNKDIMLIRLNSPVNNSTHIAPVSLPSNPPSLGSVCRVMGWGTISATKETHPDVPHCANINILDYSVCRAAYARLPATSRTLCAGILEGGKDSCKADSGGPLICNGEIQGIVSRGGHSCGQPRKPGLYTKVFDHLDWIKSIIAGNKDAICPP.

Residues 1 to 18 (MVLIRVLANLLILQLFYA) form the signal peptide. Residues 19–24 (QKSSEL) constitute a propeptide that is removed on maturation. The Peptidase S1 domain maps to 25 to 251 (IIGGDECNIN…HLDWIKSIIA (227 aa)). 6 disulfides stabilise this stretch: cysteine 31–cysteine 165, cysteine 52–cysteine 68, cysteine 100–cysteine 258, cysteine 144–cysteine 212, cysteine 176–cysteine 191, and cysteine 202–cysteine 227. Residues asparagine 123 and asparagine 124 are each glycosylated (N-linked (GlcNAc...) asparagine).

The protein belongs to the peptidase S1 family. Snake venom subfamily. As to quaternary structure, monomer. Expressed by the venom gland.

It is found in the secreted. Its function is as follows. Snake venom serine protease that may act in the hemostasis system of the prey. The polypeptide is Snake venom serine protease 2 (TLF2) (Protobothrops flavoviridis (Habu)).